Reading from the N-terminus, the 508-residue chain is Photosystem II CP47 reaction center protein (508 aa).

Helical transmembrane passes span 21–36, 101–115, 140–156, 203–218, 237–252, and 457–472; these read AVHL…WAGS, IVLS…IWHW, GIHL…FGAF, IAAG…FHLS, VLSS…AFVV, and TFAL…HGAR.

This sequence belongs to the PsbB/PsbC family. PsbB subfamily. As to quaternary structure, PSII is composed of 1 copy each of membrane proteins PsbA, PsbB, PsbC, PsbD, PsbE, PsbF, PsbH, PsbI, PsbJ, PsbK, PsbL, PsbM, PsbT, PsbX, PsbY, PsbZ, Psb30/Ycf12, at least 3 peripheral proteins of the oxygen-evolving complex and a large number of cofactors. It forms dimeric complexes. The cofactor is Binds multiple chlorophylls. PSII binds additional chlorophylls, carotenoids and specific lipids..

It is found in the plastid. The protein resides in the chloroplast thylakoid membrane. In terms of biological role, one of the components of the core complex of photosystem II (PSII). It binds chlorophyll and helps catalyze the primary light-induced photochemical processes of PSII. PSII is a light-driven water:plastoquinone oxidoreductase, using light energy to abstract electrons from H(2)O, generating O(2) and a proton gradient subsequently used for ATP formation. This is Photosystem II CP47 reaction center protein from Marchantia polymorpha (Common liverwort).